We begin with the raw amino-acid sequence, 430 residues long: Acylsugar acyltransferase 3 (430 aa).

Catalysis depends on proton acceptor residues His-155 and Asp-367.

The protein belongs to the plant acyltransferase family. In terms of assembly, monomer. As to expression, expressed in tip cells of type I trichomes of stems and petioles, sites of acylsugars production.

Its function is as follows. Catalyzes the transfer of short (four to five carbons) branched acyl chains to the furanose ring of di-acylsucrose acceptors to produce tri-acylsucroses such as S3:15 (5,5,5), S4:17 (2,5,5,5) and S4:24 (2,5,5,12) acylsucroses. This Solanum lycopersicum (Tomato) protein is Acylsugar acyltransferase 3.